The sequence spans 109 residues: U4-lycotoxin-Ls1a (109 aa).

The N-terminal stretch at 1 to 22 is a signal peptide; sequence MKVLVLFSVLFLTLFSYSSTEA. A propeptide spanning residues 23-44 is cleaved from the precursor; that stretch reads IDELDSDAEEDMLSLMANEQVR. Residues 45-88 are knottin domain; sequence AKACTPRLHDCSHDRHSCCRGELFKDVCYCFYPEGEDKTEVCSC. 4 disulfides stabilise this stretch: Cys-48-Cys-63, Cys-55-Cys-72, Cys-62-Cys-88, and Cys-74-Cys-86. Residues 89 to 108 form a linear cationic cytotoxin domain region; sequence QQPKSHKYIEKVVDKAKTVV.

This sequence belongs to the neurotoxin 19 (CSTX) family. 05 (U4-Lctx) subfamily. As to expression, expressed by the venom gland.

Its subcellular location is the secreted. Its function is as follows. Enhances the high-affinity desensitization of human P2RX3 purinoceptors. The polypeptide is U4-lycotoxin-Ls1a (Lycosa singoriensis (Wolf spider)).